A 269-amino-acid polypeptide reads, in one-letter code: Ribosomal RNA small subunit methyltransferase A (269 aa).

S-adenosyl-L-methionine contacts are provided by His-12, Leu-14, Gly-39, Glu-60, Asp-81, and Asn-103.

This sequence belongs to the class I-like SAM-binding methyltransferase superfamily. rRNA adenine N(6)-methyltransferase family. RsmA subfamily.

The protein localises to the cytoplasm. The enzyme catalyses adenosine(1518)/adenosine(1519) in 16S rRNA + 4 S-adenosyl-L-methionine = N(6)-dimethyladenosine(1518)/N(6)-dimethyladenosine(1519) in 16S rRNA + 4 S-adenosyl-L-homocysteine + 4 H(+). In terms of biological role, specifically dimethylates two adjacent adenosines (A1518 and A1519) in the loop of a conserved hairpin near the 3'-end of 16S rRNA in the 30S particle. May play a critical role in biogenesis of 30S subunits. This Leptothrix cholodnii (strain ATCC 51168 / LMG 8142 / SP-6) (Leptothrix discophora (strain SP-6)) protein is Ribosomal RNA small subunit methyltransferase A.